The primary structure comprises 352 residues: MVYQVSSPTYDIDYYTSEPCQKINVKQIAARLLPPLYSLVFIFGFVGNILVVLILINCKRLKSMTDIYLLNLAISDLLFLLTIPFWAHYAAAQWDFGNTMCQLLTGLYLIGFFSGIFFIILLTIDRYLAIVHAVFALKARTVTFGLVTSVITWVVAVFASLPGIIFTRSQREGLHYTCSSHFPSSQYQFWKNFQTLKIVILGLVLPLLVMVICYSGILKTLLRCRNEKKRHRAVRLIFTIMIVYFLFWAPYNIVLLLNTFQEFFGLNNCSSSNRLDQAMQVTETLGMTHCCINPIIYAFVGEKFRNYLLVFFQKHLAKRFCKCCSISQQEAPERASSVYTRSTGEQETTVGL.

Residues 1-30 (MVYQVSSPTYDIDYYTSEPCQKINVKQIAA) lie on the Extracellular side of the membrane. The residue at position 3 (Tyr-3) is a Sulfotyrosine. 2 O-linked (GalNAc...) serine glycosylation sites follow: Ser-6 and Ser-7. Sulfotyrosine is present on residues Tyr-10, Tyr-14, and Tyr-15. 2 disulfides stabilise this stretch: Cys-20–Cys-269 and Cys-101–Cys-178. A helical membrane pass occupies residues 31–58 (RLLPPLYSLVFIFGFVGNILVVLILINC). The Cytoplasmic segment spans residues 59–68 (KRLKSMTDIY). A helical transmembrane segment spans residues 69–89 (LLNLAISDLLFLLTIPFWAHY). At 90-102 (AAAQWDFGNTMCQ) the chain is on the extracellular side. The chain crosses the membrane as a helical span at residues 103 to 124 (LLTGLYLIGFFSGIFFIILLTI). Topologically, residues 125-141 (DRYLAIVHAVFALKART) are cytoplasmic. Residues 142–166 (VTFGLVTSVITWVVAVFASLPGIIF) form a helical membrane-spanning segment. Residues 167 to 198 (TRSQREGLHYTCSSHFPSSQYQFWKNFQTLKI) are Extracellular-facing. Residues 199–218 (VILGLVLPLLVMVICYSGIL) traverse the membrane as a helical segment. Over 219 to 235 (KTLLRCRNEKKRHRAVR) the chain is Cytoplasmic. The chain crosses the membrane as a helical span at residues 236 to 260 (LIFTIMIVYFLFWAPYNIVLLLNTF). The Extracellular portion of the chain corresponds to 261-277 (QEFFGLNNCSSSNRLDQ). The helical transmembrane segment at 278–301 (AMQVTETLGMTHCCINPIIYAFVG) threads the bilayer. Residues 302 to 352 (EKFRNYLLVFFQKHLAKRFCKCCSISQQEAPERASSVYTRSTGEQETTVGL) lie on the Cytoplasmic side of the membrane. S-palmitoyl cysteine attachment occurs at residues Cys-321, Cys-323, and Cys-324. Ser-336, Ser-337, and Ser-342 each carry phosphoserine; by BARK1.

It belongs to the G-protein coupled receptor 1 family. In terms of assembly, interacts with PRAF2. Efficient ligand binding to CCL3/MIP-1alpha and CCL4/MIP-1beta requires sulfation, O-glycosylation and sialic acid modifications. Glycosylation on Ser-6 is required for efficient binding of CCL4. Interacts with GRK2. Interacts with ARRB1 and ARRB2. Interacts with CNIH4. Interacts with S100A4; this interaction stimulates T-lymphocyte chemotaxis. In terms of processing, sulfated on at least 2 of the N-terminal tyrosines. Sulfation is required for efficient binding of the chemokines, CCL3 and CCL4. Post-translationally, palmitoylation in the C-terminal is important for cell surface expression. Phosphorylation on serine residues in the C-terminal is stimulated by binding CC chemokines especially by APO-RANTES. In terms of processing, O-glycosylated, but not N-glycosylated. Ser-6 appears to be the major site even if Ser-7 may be also O-glycosylated. Also sialylated glycans present which contribute to chemokine binding. Thr-16 and Ser-17 may also be glycosylated and, if so, with small moieties such as a T-antigen.

The protein localises to the cell membrane. Receptor for a number of inflammatory CC-chemokines including CCL3/MIP-1-alpha, CCL4/MIP-1-beta and RANTES and subsequently transduces a signal by increasing the intracellular calcium ion level. May play a role in the control of granulocytic lineage proliferation or differentiation. Participates in T-lymphocyte migration to the infection site by acting as a chemotactic receptor. In Allochrocebus solatus (Sun-tailed monkey), this protein is C-C chemokine receptor type 5 (CCR5).